The primary structure comprises 766 residues: Serine/threonine-protein kinase B-raf (766 aa).

Over residues 1-13 the composition is skewed to gly residues; it reads MAALSGGGGGGAE. The segment at 1 to 38 is disordered; it reads MAALSGGGGGGAEPGQALFNGDMEPEAGAGAGAAASSA. An N-acetylalanine modification is found at alanine 2. Serine 151 bears the Phosphoserine mark. Residues 155–227 enclose the RBD domain; sequence PIVRVFLPNK…TGEELHVEVL (73 aa). Residues 234-280 form a Phorbol-ester/DAG-type zinc finger; that stretch reads THNFVRKTFFTLAFCDFCRKLLFQGFRCQTCGYKFHQRCSTEVPLMC. Zn(2+) contacts are provided by histidine 235, cysteine 248, cysteine 251, cysteine 261, cysteine 264, histidine 269, cysteine 272, and cysteine 280. The interval 308–454 is disordered; that stretch reads AETALTSGSS…DSSDDWEIPD (147 aa). The segment covering 314–341 has biased composition (low complexity); it reads SGSSPSAPASDSIGPQILTSPSPSKSIP. Serine 333 bears the Phosphoserine mark. The segment covering 348-363 has biased composition (basic and acidic residues); the sequence is PADEDHRNQFGQRDRS. Serine 365 carries the phosphoserine; by SGK1 modification. Threonine 373 is subject to Phosphothreonine; by autocatalysis. Residue threonine 396 is modified to Phosphothreonine. Serine 399 is modified (phosphoserine). A Phosphothreonine modification is found at threonine 401. Positions 423–447 are enriched in basic and acidic residues; it reads QRERKSSSSSEDRNRMKTLGRRDSS. Phosphoserine occurs at positions 446 and 447. The region spanning 457–717 is the Protein kinase domain; the sequence is ITVGQRIGSG…PQILASIELL (261 aa). Residues 463–471 and lysine 483 each bind ATP; that span reads IGSGSFGTV. Aspartate 576 acts as the Proton acceptor in catalysis. Lysine 578 is covalently cross-linked (Glycyl lysine isopeptide (Lys-Gly) (interchain with G-Cter in ubiquitin)). Arginine 671 carries the omega-N-methylarginine; by PRMT5 modification. A phosphoserine mark is found at serine 729 and serine 750. A Phosphothreonine; by MAPK1 modification is found at threonine 753.

Belongs to the protein kinase superfamily. TKL Ser/Thr protein kinase family. RAF subfamily. As to quaternary structure, monomer. Homodimer. Heterodimerizes with RAF1, and the heterodimer possesses a highly increased kinase activity compared to the respective homodimers or monomers. Heterodimerization is mitogen-regulated and enhanced by 14-3-3 proteins. MAPK1/ERK2 activation can induce a negative feedback that promotes the dissociation of the heterodimer by phosphorylating BRAF at Thr-753. Heterodimerizes (via N-terminus) with KSR1 (via N-terminus) or KSR2 (via N-terminus) in a MAP2K1-dependent manner. Interacts with MAP2K1 and MAP2K2. Found in a complex with at least BRAF, HRAS, MAP2K1, MAPK3 and RGS14. Interacts with RIT1. Interacts (via N-terminus) with RGS14 (via RBD domains); the interaction mediates the formation of a ternary complex with RAF1, a ternary complex inhibited by GNAI1. Interacts with DGKH. Interacts with PRMT5. Interacts with KSR2. Interacts with AKAP13, MAP2K1 and KSR1. Identified in a complex with AKAP13, MAP2K1 and KSR1. Interacts with FNIP1 and FNIP2. It depends on Zn(2+) as a cofactor. In terms of processing, phosphorylation at Ser-365 by SGK1 inhibits its activity. Phosphorylation at Thr-753 by MAPK1. Dephosphorylation of Ser-365 by the SHOC2-MRAS-PP1c (SMP) complex consisting of SHOC2, GTP-bound M-Ras/MRAS and the catalytic subunit of protein phosphatase 1 (PPP1CA, PPP1CB or PPP1CC); this relieves inactivation and stimulates kinase activity. Methylation at Arg-671 decreases stability and kinase activity. Post-translationally, ubiquitinated by RNF149; which leads to proteasomal degradation. Polyubiquitinated at Lys-578 in response to EGF. Brain and testis.

It is found in the nucleus. The protein localises to the cytoplasm. It localises to the cell membrane. The enzyme catalyses L-seryl-[protein] + ATP = O-phospho-L-seryl-[protein] + ADP + H(+). It carries out the reaction L-threonyl-[protein] + ATP = O-phospho-L-threonyl-[protein] + ADP + H(+). Its activity is regulated as follows. In quiescent cells, maintained in an inactive state via an intramolecular interaction between the protein kinase and N-terminal domains. Following mitogen-mediated cell activation, binds via its RGB domain to active HRAS (GTP-bound) which releases the inhibitory intramolecular interaction between the two domains. This allows the MAP2K1-mediated dimerization of KSR1 or KSR2, and BRAF which activates BRAF. Its function is as follows. Protein kinase involved in the transduction of mitogenic signals from the cell membrane to the nucleus. Phosphorylates MAP2K1, and thereby activates the MAP kinase signal transduction pathway. Phosphorylates PFKFB2. May play a role in the postsynaptic responses of hippocampal neurons. This is Serine/threonine-protein kinase B-raf from Homo sapiens (Human).